Here is a 212-residue protein sequence, read N- to C-terminus: Adenylate kinase (212 aa).

Residue 10 to 15 (GAGKGT) participates in ATP binding. Residues 30 to 59 (AIGDIFRAIIKTSSKDAEVINSYVEQGKLI) are NMP. AMP is bound by residues Arg-36, 57-59 (KLI), 85-88 (GYPR), and Gln-92. Residues 122–160 (GRYSCKSCGKIYNDYFLKPRIDKICDVCKSSVFEYRKDD) are LID. Arg-123 contacts ATP. Zn(2+)-binding residues include Cys-126 and Cys-129. 132 to 133 (IY) provides a ligand contact to ATP. Cys-146 and Cys-149 together coordinate Zn(2+). Positions 157 and 168 each coordinate AMP. Position 196 (Lys-196) interacts with ATP.

It belongs to the adenylate kinase family. Monomer.

The protein resides in the cytoplasm. It carries out the reaction AMP + ATP = 2 ADP. Its pathway is purine metabolism; AMP biosynthesis via salvage pathway; AMP from ADP: step 1/1. In terms of biological role, catalyzes the reversible transfer of the terminal phosphate group between ATP and AMP. Plays an important role in cellular energy homeostasis and in adenine nucleotide metabolism. The chain is Adenylate kinase from Rickettsia bellii (strain RML369-C).